Consider the following 312-residue polypeptide: Aspartate carbamoyltransferase catalytic subunit (312 aa).

Residues arginine 58 and threonine 59 each coordinate carbamoyl phosphate. Lysine 86 lines the L-aspartate pocket. The carbamoyl phosphate site is built by arginine 108, histidine 136, and glutamine 139. L-aspartate is bound by residues arginine 169 and arginine 223. Residues glycine 264 and proline 265 each contribute to the carbamoyl phosphate site.

The protein belongs to the aspartate/ornithine carbamoyltransferase superfamily. ATCase family. Heterododecamer (2C3:3R2) of six catalytic PyrB chains organized as two trimers (C3), and six regulatory PyrI chains organized as three dimers (R2).

It catalyses the reaction carbamoyl phosphate + L-aspartate = N-carbamoyl-L-aspartate + phosphate + H(+). Its pathway is pyrimidine metabolism; UMP biosynthesis via de novo pathway; (S)-dihydroorotate from bicarbonate: step 2/3. Functionally, catalyzes the condensation of carbamoyl phosphate and aspartate to form carbamoyl aspartate and inorganic phosphate, the committed step in the de novo pyrimidine nucleotide biosynthesis pathway. The chain is Aspartate carbamoyltransferase catalytic subunit from Acetivibrio thermocellus (strain ATCC 27405 / DSM 1237 / JCM 9322 / NBRC 103400 / NCIMB 10682 / NRRL B-4536 / VPI 7372) (Clostridium thermocellum).